The primary structure comprises 271 residues: Neurexophilin-1 (271 aa).

The first 21 residues, 1-21 (MQAACWYVLFLLQPTVYLVTC), serve as a signal peptide directing secretion. Residues 22 to 97 (ANLTNGGKSE…WDWLRNSTDL (76 aa)) form an II region. N-linked (GlcNAc...) asparagine glycosylation is found at asparagine 23, asparagine 68, asparagine 93, asparagine 146, asparagine 156, and asparagine 162. Positions 98–176 (QEPRPRAKRR…LVPPTKIVEF (79 aa)) are III. Positions 177–185 (DLAQQTVID) are IV (linker domain). The interval 186 to 271 (AKDSKSFNCR…HSDTPYFPSG (86 aa)) is v (Cys-rich).

The protein belongs to the neurexophilin family.

Its subcellular location is the secreted. Functionally, may be signaling molecules that resemble neuropeptides and that act by binding to alpha-neurexins and possibly other receptors. The chain is Neurexophilin-1 (NXPH1) from Homo sapiens (Human).